Reading from the N-terminus, the 376-residue chain is N-acetyldiaminopimelate deacetylase (376 aa).

Aspartate 69 is a catalytic residue. The Proton acceptor role is filled by glutamate 128.

Belongs to the peptidase M20A family. N-acetyldiaminopimelate deacetylase subfamily.

It carries out the reaction N-acetyl-(2S,6S)-2,6-diaminopimelate + H2O = (2S,6S)-2,6-diaminopimelate + acetate. Its pathway is amino-acid biosynthesis; L-lysine biosynthesis via DAP pathway; LL-2,6-diaminopimelate from (S)-tetrahydrodipicolinate (acetylase route): step 3/3. Functionally, catalyzes the conversion of N-acetyl-diaminopimelate to diaminopimelate and acetate. The sequence is that of N-acetyldiaminopimelate deacetylase from Bacillus anthracis (strain A0248).